Here is a 365-residue protein sequence, read N- to C-terminus: NAD(P)H-quinone oxidoreductase subunit 1, chloroplastic (365 aa).

The next 6 membrane-spanning stretches (helical) occupy residues 30–50, 104–124, 129–149, 253–273, 302–322, and 338–358; these read LVPI…IVWL, IAVI…HFVL, IGVF…LMSG, FGLF…FVAV, VFGT…FLFI, and LLNL…LLTT.

Belongs to the complex I subunit 1 family. In terms of assembly, NDH is composed of at least 16 different subunits, 5 of which are encoded in the nucleus.

The protein localises to the plastid. Its subcellular location is the chloroplast thylakoid membrane. It catalyses the reaction a plastoquinone + NADH + (n+1) H(+)(in) = a plastoquinol + NAD(+) + n H(+)(out). The catalysed reaction is a plastoquinone + NADPH + (n+1) H(+)(in) = a plastoquinol + NADP(+) + n H(+)(out). NDH shuttles electrons from NAD(P)H:plastoquinone, via FMN and iron-sulfur (Fe-S) centers, to quinones in the photosynthetic chain and possibly in a chloroplast respiratory chain. The immediate electron acceptor for the enzyme in this species is believed to be plastoquinone. Couples the redox reaction to proton translocation, and thus conserves the redox energy in a proton gradient. This chain is NAD(P)H-quinone oxidoreductase subunit 1, chloroplastic, found in Populus trichocarpa (Western balsam poplar).